Reading from the N-terminus, the 360-residue chain is Membrane-bound lytic murein transglycosylase C (360 aa).

Residues methionine 1–serine 16 form the signal peptide. Cysteine 17 carries the N-palmitoyl cysteine lipid modification. Residue cysteine 17 is the site of S-diacylglycerol cysteine attachment.

Belongs to the transglycosylase Slt family.

It localises to the cell outer membrane. It catalyses the reaction Exolytic cleavage of the (1-&gt;4)-beta-glycosidic linkage between N-acetylmuramic acid (MurNAc) and N-acetylglucosamine (GlcNAc) residues in peptidoglycan, from either the reducing or the non-reducing ends of the peptidoglycan chains, with concomitant formation of a 1,6-anhydrobond in the MurNAc residue.. Its function is as follows. Murein-degrading enzyme. May play a role in recycling of muropeptides during cell elongation and/or cell division. This Cronobacter sakazakii (strain ATCC BAA-894) (Enterobacter sakazakii) protein is Membrane-bound lytic murein transglycosylase C.